A 543-amino-acid chain; its full sequence is Malate synthase (543 aa).

Arginine 162 serves as the catalytic Proton acceptor. Aspartate 449 functions as the Proton donor in the catalytic mechanism.

Belongs to the malate synthase family.

It catalyses the reaction glyoxylate + acetyl-CoA + H2O = (S)-malate + CoA + H(+). Its pathway is carbohydrate metabolism; glyoxylate cycle; (S)-malate from isocitrate: step 2/2. The sequence is that of Malate synthase (masA) from Dictyostelium discoideum (Social amoeba).